Here is a 262-residue protein sequence, read N- to C-terminus: Glycerol uptake facilitator protein (262 aa).

Over methionine 1–lysine 7 the chain is Cytoplasmic. A helical transmembrane segment spans residues lysine 8–leucine 36. Topologically, residues threonine 37–phenylalanine 41 are extracellular. A helical membrane pass occupies residues asparagine 42–serine 62. Residues serine 63 to serine 65 lie on the Cytoplasmic side of the membrane. Residues glycine 66–leucine 69 lie within the membrane without spanning it. The NPA 1 signature appears at asparagine 70–alanine 72. An intramembrane region (helical) is located at residues asparagine 70–serine 80. The Cytoplasmic segment spans residues serine 81–lysine 86. Residues lysine 87–phenylalanine 110 form a helical membrane-spanning segment. Residues asparagine 111–tyrosine 145 are Extracellular-facing. A helical membrane pass occupies residues asparagine 146–lysine 171. Residues asparagine 172–phenylalanine 180 lie on the Cytoplasmic side of the membrane. A helical transmembrane segment spans residues isoleucine 181–leucine 197. The Extracellular portion of the chain corresponds to threonine 198–serine 201. An intramembrane segment occupies asparagine 202 to leucine 205. Positions asparagine 206–alanine 208 match the NPA 2 motif. Positions asparagine 206–leucine 219 form an intramembrane region, helical. The Extracellular portion of the chain corresponds to isoleucine 220–isoleucine 234. Residues phenylalanine 235 to tyrosine 259 form a helical membrane-spanning segment. Over isoleucine 260–lysine 262 the chain is Cytoplasmic.

Belongs to the MIP/aquaporin (TC 1.A.8) family.

Its subcellular location is the cell membrane. It catalyses the reaction glycerol(in) = glycerol(out). Its function is as follows. Mediates glycerol diffusion across the cytoplasmic membrane via a pore-type mechanism. This is Glycerol uptake facilitator protein (glpF) from Buchnera aphidicola subsp. Schizaphis graminum (strain Sg).